Here is a 143-residue protein sequence, read N- to C-terminus: MAKEFSRTRRIAQQLQQELAMVLQRDMKDPRIGFVTVNDVDVSRDLSYAKVYVTFFEEDTELVQQKIDALTVAAPYVRTLVAGRMKLRVMPELRFIYDSSLVEGMRMSNLVTQVINKDKAKQQQFTPDTPDNSESVDGEKEQD.

A disordered region spans residues 119 to 143; sequence KAKQQQFTPDTPDNSESVDGEKEQD. The span at 122–133 shows a compositional bias: polar residues; sequence QQQFTPDTPDNS.

This sequence belongs to the RbfA family. In terms of assembly, monomer. Binds 30S ribosomal subunits, but not 50S ribosomal subunits or 70S ribosomes.

The protein localises to the cytoplasm. In terms of biological role, one of several proteins that assist in the late maturation steps of the functional core of the 30S ribosomal subunit. Associates with free 30S ribosomal subunits (but not with 30S subunits that are part of 70S ribosomes or polysomes). Required for efficient processing of 16S rRNA. May interact with the 5'-terminal helix region of 16S rRNA. The polypeptide is Ribosome-binding factor A (Shewanella frigidimarina (strain NCIMB 400)).